Reading from the N-terminus, the 126-residue chain is Histone H2B type 1-N (126 aa).

The span at 1 to 12 shows a compositional bias: low complexity; that stretch reads MPEPSKSAPAPK. A disordered region spans residues 1–36; it reads MPEPSKSAPAPKKGSKKAVTKAQKKDGKKRKRSRKE. Pro-2 is modified (N-acetylproline). Glu-3 carries the ADP-ribosyl glutamic acid modification. Position 6 is an N6-(2-hydroxyisobutyryl)lysine; alternate (Lys-6). Lys-6 carries the post-translational modification N6-(beta-hydroxybutyryl)lysine; alternate. Lys-6 bears the N6-acetyllysine; alternate mark. Lys-6 is subject to N6-butyryllysine; alternate. At Lys-6 the chain carries N6-crotonyllysine; alternate. An N6-lactoyllysine; alternate modification is found at Lys-6. Lys-6 is covalently cross-linked (Glycyl lysine isopeptide (Lys-Gly) (interchain with G-Cter in SUMO2); alternate). Ser-7 is subject to ADP-ribosylserine. Residue Lys-12 is modified to N6-(beta-hydroxybutyryl)lysine; alternate. 2 positions are modified to N6-acetyllysine; alternate: Lys-12 and Lys-13. Residues Lys-12 and Lys-13 each carry the N6-crotonyllysine; alternate modification. N6-lactoyllysine; alternate is present on Lys-12. Residue Lys-13 is modified to N6-(2-hydroxyisobutyryl)lysine; alternate. Ser-15 is subject to Phosphoserine; by STK4/MST1. Residues Lys-16, Lys-17, Lys-21, and Lys-24 each carry the N6-acetyllysine; alternate modification. 4 positions are modified to N6-crotonyllysine; alternate: Lys-16, Lys-17, Lys-21, and Lys-24. N6-lactoyllysine; alternate is present on residues Lys-16, Lys-17, Lys-21, and Lys-24. 2 positions are modified to N6-(beta-hydroxybutyryl)lysine; alternate: Lys-17 and Lys-21. Lys-17 carries the post-translational modification N6-glutaryllysine; alternate. Lys-21 and Lys-24 each carry N6-(2-hydroxyisobutyryl)lysine; alternate. Lys-21 carries the N6-butyryllysine; alternate modification. Lys-21 participates in a covalent cross-link: Glycyl lysine isopeptide (Lys-Gly) (interchain with G-Cter in SUMO2); alternate. Lys-25 is modified (N6-(2-hydroxyisobutyryl)lysine). Lys-35 bears the N6-(2-hydroxyisobutyryl)lysine; alternate mark. At Lys-35 the chain carries N6-(beta-hydroxybutyryl)lysine; alternate. Position 35 is an N6-crotonyllysine; alternate (Lys-35). Lys-35 carries the post-translational modification N6-glutaryllysine; alternate. Residue Lys-35 is modified to N6-succinyllysine; alternate. Lys-35 participates in a covalent cross-link: Glycyl lysine isopeptide (Lys-Gly) (interchain with G-Cter in ubiquitin); alternate. PolyADP-ribosyl glutamic acid is present on Glu-36. The residue at position 37 (Ser-37) is a Phosphoserine; by AMPK. 3 positions are modified to N6-(2-hydroxyisobutyryl)lysine; alternate: Lys-44, Lys-47, and Lys-58. The residue at position 44 (Lys-44) is an N6-lactoyllysine; alternate. Lys-44 and Lys-47 each carry N6-glutaryllysine; alternate. An N6-methyllysine; alternate modification is found at Lys-47. Lys-58 carries the post-translational modification N6,N6-dimethyllysine; alternate. The residue at position 80 (Arg-80) is a Dimethylated arginine. Position 86 is an N6-(2-hydroxyisobutyryl)lysine; alternate (Lys-86). Position 86 is an N6-(beta-hydroxybutyryl)lysine; alternate (Lys-86). The residue at position 86 (Lys-86) is an N6-acetyllysine; alternate. N6-lactoyllysine; alternate is present on Lys-86. Lys-86 carries the post-translational modification N6,N6,N6-trimethyllysine; alternate. Arg-87 and Arg-93 each carry omega-N-methylarginine. Lys-109 bears the N6-(2-hydroxyisobutyryl)lysine; alternate mark. The residue at position 109 (Lys-109) is an N6-lactoyllysine; alternate. Position 109 is an N6-glutaryllysine; alternate (Lys-109). At Lys-109 the chain carries N6-methyllysine; alternate. O-linked (GlcNAc) serine glycosylation occurs at Ser-113. Phosphothreonine is present on Thr-116. 2 positions are modified to N6-(2-hydroxyisobutyryl)lysine; alternate: Lys-117 and Lys-121. N6-(beta-hydroxybutyryl)lysine; alternate is present on residues Lys-117 and Lys-121. Lys-117 and Lys-121 each carry N6-lactoyllysine; alternate. Lys-117 and Lys-121 each carry N6-glutaryllysine; alternate. 2 positions are modified to N6-succinyllysine; alternate: Lys-117 and Lys-121. An N6-malonyllysine; alternate modification is found at Lys-117. Lys-117 is subject to N6-methylated lysine; alternate. Lys-121 participates in a covalent cross-link: Glycyl lysine isopeptide (Lys-Gly) (interchain with G-Cter in ubiquitin); alternate.

The protein belongs to the histone H2B family. As to quaternary structure, the nucleosome is a histone octamer containing two molecules each of H2A, H2B, H3 and H4 assembled in one H3-H4 heterotetramer and two H2A-H2B heterodimers. The octamer wraps approximately 147 bp of DNA. In terms of processing, monoubiquitination at Lys-35 (H2BK34Ub) by the MSL1/MSL2 dimer is required for histone H3 'Lys-4' (H3K4me) and 'Lys-79' (H3K79me) methylation and transcription activation at specific gene loci, such as HOXA9 and MEIS1 loci. Similarly, monoubiquitination at Lys-121 (H2BK120Ub) by the RNF20/40 complex gives a specific tag for epigenetic transcriptional activation and is also prerequisite for histone H3 'Lys-4' and 'Lys-79' methylation. It also functions cooperatively with the FACT dimer to stimulate elongation by RNA polymerase II. H2BK120Ub also acts as a regulator of mRNA splicing: deubiquitination by USP49 is required for efficient cotranscriptional splicing of a large set of exons. Post-translationally, phosphorylation at Ser-37 (H2BS36ph) by AMPK in response to stress promotes transcription. Phosphorylated on Ser-15 (H2BS14ph) by STK4/MST1 during apoptosis; which facilitates apoptotic chromatin condensation. Also phosphorylated on Ser-15 in response to DNA double strand breaks (DSBs), and in correlation with somatic hypermutation and immunoglobulin class-switch recombination. GlcNAcylation at Ser-113 promotes monoubiquitination of Lys-121. It fluctuates in response to extracellular glucose, and associates with transcribed genes. In terms of processing, ADP-ribosylated by PARP1 or PARP2 on Ser-7 (H2BS6ADPr) in response to DNA damage. H2BS6ADPr promotes recruitment of CHD1L. Mono-ADP-ribosylated on Glu-3 (H2BE2ADPr) by PARP3 in response to single-strand breaks. Poly ADP-ribosylation on Glu-36 (H2BE35ADPr) by PARP1 regulates adipogenesis: it inhibits phosphorylation at Ser-37 (H2BS36ph), thereby blocking expression of pro-adipogenetic genes. Post-translationally, crotonylation (Kcr) is specifically present in male germ cells and marks testis-specific genes in post-meiotic cells, including X-linked genes that escape sex chromosome inactivation in haploid cells. Crotonylation marks active promoters and enhancers and confers resistance to transcriptional repressors. It is also associated with post-meiotically activated genes on autosomes. Lactylated in macrophages by EP300/P300 by using lactoyl-CoA directly derived from endogenous or exogenous lactate, leading to stimulates gene transcription.

The protein resides in the nucleus. It is found in the chromosome. Functionally, core component of nucleosome. Nucleosomes wrap and compact DNA into chromatin, limiting DNA accessibility to the cellular machineries which require DNA as a template. Histones thereby play a central role in transcription regulation, DNA repair, DNA replication and chromosomal stability. DNA accessibility is regulated via a complex set of post-translational modifications of histones, also called histone code, and nucleosome remodeling. The polypeptide is Histone H2B type 1-N (Homo sapiens (Human)).